A 374-amino-acid polypeptide reads, in one-letter code: Golgi-associated kinase 1B (374 aa).

At 1 to 38 the chain is on the cytoplasmic side; it reads MSPDRTGRGSSSSSSSLKRLVCKSFVRAWGRRRPNLRR. A helical; Signal-anchor for type II membrane protein membrane pass occupies residues 39-61; the sequence is AVLLICTASAIYGIVIASQVLRG. Over 62 to 374 the chain is Extracellular; sequence STHPGKALRK…LLQVYTRLDR (313 aa). Positions 136 to 146 are enriched in basic residues; sequence VRPKKRRKYGA. The interval 136–177 is disordered; sequence VRPKKRRKYGARRPGVVQDTESKKDTLWSKVPNSQHKSQAQS. Polar residues predominate over residues 166-177; that stretch reads VPNSQHKSQAQS. Asn281 and Asn314 each carry an N-linked (GlcNAc...) asparagine glycan.

The protein belongs to the GASK family.

The protein resides in the golgi apparatus membrane. This chain is Golgi-associated kinase 1B, found in Xenopus laevis (African clawed frog).